We begin with the raw amino-acid sequence, 312 residues long: Ribosomal RNA small subunit methyltransferase H (312 aa).

S-adenosyl-L-methionine is bound by residues 38-40, D58, F84, D104, and Q111; that span reads GGH.

It belongs to the methyltransferase superfamily. RsmH family.

The protein resides in the cytoplasm. The catalysed reaction is cytidine(1402) in 16S rRNA + S-adenosyl-L-methionine = N(4)-methylcytidine(1402) in 16S rRNA + S-adenosyl-L-homocysteine + H(+). Functionally, specifically methylates the N4 position of cytidine in position 1402 (C1402) of 16S rRNA. The polypeptide is Ribosomal RNA small subunit methyltransferase H (Alcanivorax borkumensis (strain ATCC 700651 / DSM 11573 / NCIMB 13689 / SK2)).